The sequence spans 319 residues: ATP-dependent 6-phosphofructokinase (319 aa).

Glycine 11 is a binding site for ATP. 21-25 (RAVVR) contributes to the ADP binding site. Residues 72 to 73 (RS) and 102 to 105 (GDGS) contribute to the ATP site. Aspartate 103 is a Mg(2+) binding site. 125 to 127 (TID) is a binding site for substrate. The Proton acceptor role is filled by aspartate 127. Arginine 154 provides a ligand contact to ADP. Substrate is bound by residues arginine 162 and 169–171 (MGR). ADP-binding positions include 185–187 (GAE), arginine 211, and 213–215 (KKH). Residues glutamate 222, arginine 243, and 249 to 252 (HIQR) each bind substrate.

It belongs to the phosphofructokinase type A (PFKA) family. ATP-dependent PFK group I subfamily. Prokaryotic clade 'B1' sub-subfamily. Homotetramer. Mg(2+) is required as a cofactor.

The protein localises to the cytoplasm. It catalyses the reaction beta-D-fructose 6-phosphate + ATP = beta-D-fructose 1,6-bisphosphate + ADP + H(+). The protein operates within carbohydrate degradation; glycolysis; D-glyceraldehyde 3-phosphate and glycerone phosphate from D-glucose: step 3/4. Its activity is regulated as follows. Allosterically activated by ADP and other diphosphonucleosides, and allosterically inhibited by phosphoenolpyruvate. Functionally, catalyzes the phosphorylation of D-fructose 6-phosphate to fructose 1,6-bisphosphate by ATP, the first committing step of glycolysis. This chain is ATP-dependent 6-phosphofructokinase, found in Oceanobacillus iheyensis (strain DSM 14371 / CIP 107618 / JCM 11309 / KCTC 3954 / HTE831).